Reading from the N-terminus, the 222-residue chain is Ornithine decarboxylase antizyme 1 (222 aa).

The protein belongs to the ODC antizyme family. Interacts with ODC1 and thereby sterically blocks ODC homodimerization. Forms a ternary complex with PSMB4 and OAZ1 before PSMB4 is incorporated into the 20S proteasome. Interacts with AZIN2; this interaction disrupts the interaction between the antizyme and ODC1. Interacts with FAM171A1.

Ornithine decarboxylase (ODC) antizyme protein that negatively regulates ODC activity and intracellular polyamine biosynthesis and uptake in response to increased intracellular polyamine levels. Binds to ODC monomers, inhibiting the assembly of the functional ODC homodimer, and targets the monomers for ubiquitin-independent proteolytic destruction by the 26S proteasome. Triggers ODC degradation by inducing the exposure of a cryptic proteasome-interacting surface of ODC. Stabilizes AZIN2 by interfering with its ubiquitination. Also inhibits cellular uptake of polyamines by inactivating the polyamine uptake transporter. SMAD1/OAZ1/PSMB4 complex mediates the degradation of the CREBBP/EP300 repressor SNIP1. Involved in the translocation of AZIN2 from ER-Golgi intermediate compartment (ERGIC) to the cytosol. The sequence is that of Ornithine decarboxylase antizyme 1 (OAZ1) from Mesocricetus auratus (Golden hamster).